The chain runs to 637 residues: Zinc-transporting ATPase (637 aa).

The next 4 membrane-spanning stretches (helical) occupy residues 43–63, 89–109, 258–278, and 286–306; these read GWLL…AFVI, IFAA…ILIF, GVLI…GWSW, and MVFM…PAAL. Asp337 acts as the 4-aspartylphosphate intermediate in catalysis. Residues Asp535 and Asp539 each coordinate Mg(2+). The chain crosses the membrane as a helical span at residues 599 to 619; the sequence is VICLLICANFLQAMELPFGVI.

This sequence belongs to the cation transport ATPase (P-type) (TC 3.A.3) family. Type IB subfamily.

Its subcellular location is the cell membrane. The catalysed reaction is Zn(2+)(out) + ATP(in) + H2O(in) = Zn(2+)(in) + ADP(in) + phosphate(in) + H(+)(in). Its function is as follows. Couples the hydrolysis of ATP with the transport of zinc into the cell. Plays an important role in protecting cells against oxidative stress. ZosA-mediated zinc transport is required for post-transcriptional control of comK and competence development. This Bacillus subtilis (strain 168) protein is Zinc-transporting ATPase (zosA).